Here is a 399-residue protein sequence, read N- to C-terminus: S-adenosylmethionine synthase (399 aa).

His15 is an ATP binding site. Residue Asp17 coordinates Mg(2+). Glu43 contributes to the K(+) binding site. L-methionine-binding residues include Glu56 and Gln99. The tract at residues 99–109 (QSPDIADGVDH) is flexible loop. Residues 175–177 (DAK), 242–243 (RF), Asp251, 257–258 (RK), Ala274, and Lys278 each bind ATP. L-methionine is bound at residue Asp251. Lys282 is a binding site for L-methionine.

Belongs to the AdoMet synthase family. Homotetramer; dimer of dimers. It depends on Mg(2+) as a cofactor. K(+) is required as a cofactor.

The protein localises to the cytoplasm. It carries out the reaction L-methionine + ATP + H2O = S-adenosyl-L-methionine + phosphate + diphosphate. It participates in amino-acid biosynthesis; S-adenosyl-L-methionine biosynthesis; S-adenosyl-L-methionine from L-methionine: step 1/1. Functionally, catalyzes the formation of S-adenosylmethionine (AdoMet) from methionine and ATP. The overall synthetic reaction is composed of two sequential steps, AdoMet formation and the subsequent tripolyphosphate hydrolysis which occurs prior to release of AdoMet from the enzyme. The sequence is that of S-adenosylmethionine synthase from Lactobacillus acidophilus (strain ATCC 700396 / NCK56 / N2 / NCFM).